The following is a 646-amino-acid chain: Lamin-1 (646 aa).

The head stretch occupies residues 1-85 (MAEKAGEAGV…GSRATSPTSF (85 aa)). The interval 1–94 (MAEKAGEAGV…FSRAQEKEEL (94 aa)) is disordered. Composition is skewed to polar residues over residues 48 to 67 (ATPSSQQSQKSVRTESSMSL) and 75 to 87 (QGSRATSPTSFSR). The interval 86-126 (SRAQEKEELQNLNDRLAKILNKLNDSEEENRTLKIRLTTVQ) is coil 1A. An IF rod domain is found at 90–446 (EKEELQNLND…KLLSDEEIRL (357 aa)). Residues 127–137 (QETSADLNDQI) form a linker 1 region. The interval 138-281 (GKYRDELERA…SKLQRQSLSV (144 aa)) is coil 1B. Residues 281–301 (VTTVDHHSAQSTSRRSGSDFS) are compositionally biased toward polar residues. A disordered region spans residues 281–304 (VTTVDHHSAQSTSRRSGSDFSASV). Residues 282-299 (TTVDHHSAQSTSRRSGSD) are linker 2. The interval 300–439 (FSASVEDMRS…TELEMYNKLL (140 aa)) is coil 2. A tail region spans residues 440 to 646 (SDEEIRLGIT…GKGILGFFGL (207 aa)). The short motif at 457–471 (VRHGAKKRKLTETFY) is the Nuclear localization signal element. Residues 476-487 (GSRSSAGSRSAG) show a composition bias toward low complexity. Residues 476 to 513 (GSRSSAGSRSAGHNSTPVTKSQVTRTTVKTSENKSKAS) are disordered. A compositionally biased stretch (polar residues) spans 488-505 (HNSTPVTKSQVTRTTVKT). In terms of domain architecture, LTD spans 504-618 (KTSENKSKAS…NQMATYEVSA (115 aa)).

Belongs to the intermediate filament family.

It localises to the nucleus. Its function is as follows. Intermediate filament (IF) protein, component of the nuclear lamina, a fibrous layer on the nucleoplasmic side of the inner nuclear membrane, which is thought to provide a framework for the nuclear envelope. This chain is Lamin-1, found in Hypsibius exemplaris (Freshwater tardigrade).